The primary structure comprises 325 residues: MHTEADPTVWQGRVDAEEGALGQRWHQVVRSADAASPLNGAVALAGFACDAGIARNHGRVGAQAGPAAIRRMLANLPARPGRAIVDAGDVTCRGDALEAAQDALSGVLHGLLDRGAFPIALGGGHELAWASFGGLARHLAARSAQPPRIGILNLDAHFDLRAGERGSSGTPFRQIAEDCARRGWPFRYACLGISAYANTEALFARARQLGVRWLRDDEMDLLHLPRVLQTVDAFLADVDHVYLTICLDVLPAGVAPGVSAPSARGVPMEVIEPIVDRVAASGKLRLADVAELNPSLDIDHRTARVAARLVARVVDGVAPQGAAHG.

Positions 125, 155, 157, 159, 246, and 248 each coordinate Mn(2+).

This sequence belongs to the arginase family. Mn(2+) is required as a cofactor.

It carries out the reaction N-formimidoyl-L-glutamate + H2O = formamide + L-glutamate. The protein operates within amino-acid degradation; L-histidine degradation into L-glutamate; L-glutamate from N-formimidoyl-L-glutamate (hydrolase route): step 1/1. Functionally, catalyzes the conversion of N-formimidoyl-L-glutamate to L-glutamate and formamide. This chain is Formimidoylglutamase, found in Ralstonia nicotianae (strain ATCC BAA-1114 / GMI1000) (Ralstonia solanacearum).